The chain runs to 66 residues: ATP synthase subunit c (66 aa).

A run of 2 helical transmembrane segments spans residues 3-23 (LTFL…GLLM) and 45-65 (FLGV…SFII).

It belongs to the ATPase C chain family. In terms of assembly, F-type ATPases have 2 components, F(1) - the catalytic core - and F(0) - the membrane proton channel. F(1) has five subunits: alpha(3), beta(3), gamma(1), delta(1), epsilon(1). F(0) has three main subunits: a(1), b(2) and c(10-14). The alpha and beta chains form an alternating ring which encloses part of the gamma chain. F(1) is attached to F(0) by a central stalk formed by the gamma and epsilon chains, while a peripheral stalk is formed by the delta and b chains.

The protein localises to the cell membrane. Its function is as follows. F(1)F(0) ATP synthase produces ATP from ADP in the presence of a proton or sodium gradient. F-type ATPases consist of two structural domains, F(1) containing the extramembraneous catalytic core and F(0) containing the membrane proton channel, linked together by a central stalk and a peripheral stalk. During catalysis, ATP synthesis in the catalytic domain of F(1) is coupled via a rotary mechanism of the central stalk subunits to proton translocation. In terms of biological role, key component of the F(0) channel; it plays a direct role in translocation across the membrane. A homomeric c-ring of between 10-14 subunits forms the central stalk rotor element with the F(1) delta and epsilon subunits. This is ATP synthase subunit c from Streptococcus pneumoniae serotype 19F (strain G54).